A 183-amino-acid polypeptide reads, in one-letter code: MPFYICSDPDPKRTVRGPRFTVPDPKPPPDPAHPLDDTDNVMTAFPKFKPYGFSVYNPWDPIFLSMFGRAGRNGAKGPRGRRRSPRPPGGSSMTPGDDGNQGPRGPGEQRDQPDQMDPLVHPVTSVRSGPWERLGLRGRGESGVLRETLEMWAGQEGLISRVRDDPRESEVRPVTGVQTVWPE.

Disordered regions lie at residues 1–44 (MPFY…VMTA), 68–137 (GRAG…LGLR), and 163–183 (RDDP…VWPE).

This is an uncharacterized protein from Dryophytes versicolor (chameleon treefrog).